The sequence spans 180 residues: Signal peptidase complex subunit 3 (180 aa).

At 1–12 (MHNLLSRANSLL) the chain is on the cytoplasmic side. Residues 13–33 (AFTLWVMAAVTAACFLSTVFL) traverse the membrane as a helical; Signal-anchor for type II membrane protein segment. Over 34-180 (DYTVSNHLEV…PTTYTTTRRS (147 aa)) the chain is Lumenal. An N-linked (GlcNAc...) asparagine glycan is attached at asparagine 141.

Belongs to the SPCS3 family. Component of the signal peptidase complex (SPC) composed of a catalytic subunit sec-11 and three accessory subunits spcs-1, spcs-2 and spcs-3. The complex induces a local thinning of the ER membrane which is used to measure the length of the signal peptide (SP) h-region of protein substrates. This ensures the selectivity of the complex towards h-regions shorter than 18-20 amino acids.

It localises to the endoplasmic reticulum membrane. Its function is as follows. Essential component of the signal peptidase complex (SPC) which catalyzes the cleavage of N-terminal signal sequences from nascent proteins as they are translocated into the lumen of the endoplasmic reticulum. Essential for the SPC catalytic activity, possibly by stabilizing and positioning the active center of the complex close to the lumenal surface. The chain is Signal peptidase complex subunit 3 from Caenorhabditis briggsae.